A 1104-amino-acid chain; its full sequence is tRNA ligase 1 (1104 aa).

Lys152 (N6-AMP-lysine intermediate) is an active-site residue.

Belongs to the TRL1 family. The cofactor is Mg(2+). As to expression, mainly expressed in proliferating cells and tissues such as root meristems, the vasculature of developing plantlets, flowers and elongating tissue.

Its subcellular location is the nucleus. The protein localises to the cytoplasm. It catalyses the reaction ATP + (ribonucleotide)n-3'-hydroxyl + 5'-phospho-(ribonucleotide)m = (ribonucleotide)n+m + AMP + diphosphate.. Its activity is regulated as follows. Requires the presence of NTP, preferentially ATP rather than dATP, UTP, CTP and GTP, respectively, to mediate ribonucleotide 5'-phosphorylation. Its function is as follows. Essential component of stress-response pathways entailing repair of RNA breaks with 2',3'-cyclic phosphate and 5'-OH ends. Tri-functional enzyme that repairs RNA breaks with 2',3'-cyclic-PO(4) and 5'-OH ends. The ligation activity requires three sequential enzymatic activities: opening of the 2'3'-cyclic phosphodiester bond of the 5' half-tRNA leaving a 2'-phosphomonoester (CPDase activity), phosphorylation of the 5' terminus of the 3' half-tRNA in the presence of ATP (kinase activity) and ligation of the two tRNA halves in an ATP-dependent reaction (ligase activity). Deficient in transferring AMP to pRNA(OH) to form AppRNA(OH) but proficient at sealing pre-adenylylated AppRNA(OH). CPDase and kinase reactions are almost insensitive to RNA length, whereas the ligase activity decreases with shorter RNA size. Can also splice DNA ended by a single 3'-terminal ribonucleoside 2',3'-cyclic-PO(4). Binds to mRNA, mature and immature. Exhibits tRNA ligase activity in vitro. Required for the splicing of precursor tRNA molecules containing introns. Can circularize an intron cleaved from a pre-tRNA by splicing endonuclease in vitro. Seems not involved in unfolded protein response (UPR) in the endoplasmic reticulum. Involved in auxin signaling and polar transport during organ morphogenesis. This Arabidopsis thaliana (Mouse-ear cress) protein is tRNA ligase 1.